The chain runs to 285 residues: (3S)-malyl-CoA thioesterase (285 aa).

The substrate site is built by Arg70 and Glu122. Mg(2+) contacts are provided by Glu122 and Asp148.

The protein belongs to the HpcH/HpaI aldolase family. In terms of assembly, homodimer or homotrimer. Requires Mg(2+) as cofactor.

The enzyme catalyses (S)-malyl-CoA + H2O = (S)-malate + CoA + H(+). Functionally, catalyzes the hydrolysis of (3S)-malyl-CoA to (3S)-malate and free CoA. Inactive towards beta-methylmalyl-CoA and other CoA esters. This chain is (3S)-malyl-CoA thioesterase, found in Cereibacter sphaeroides (strain ATCC 17029 / ATH 2.4.9) (Rhodobacter sphaeroides).